A 247-amino-acid chain; its full sequence is Zinc finger protein YPR015C (247 aa).

C2H2-type zinc fingers lie at residues lysine 185–histidine 207 and phenylalanine 213–histidine 237.

The protein is Zinc finger protein YPR015C of Saccharomyces cerevisiae (strain ATCC 204508 / S288c) (Baker's yeast).